A 487-amino-acid chain; its full sequence is Signal recognition particle subunit SRP54 (487 aa).

The segment at 1 to 295 is G-domain; that stretch reads MVLSQLGSSL…DAESFVRKLL (295 aa). GTP is bound by residues 108–115, 190–194, and 248–251; these read GLQGAGKT, DTSGR, and TKLD. Residues 296–487 form an M-domain region; that stretch reads GMGDLKGIAK…LGGTGKKGKK (192 aa).

Belongs to the GTP-binding SRP family. SRP54 subfamily. Component of a signal recognition particle (SRP) complex that consists of a 7SL RNA molecule of 300 nucleotides and six protein subunits: SRP72, SRP68, SRP54, SRP19, SRP14 and SRP9.

It is found in the cytoplasm. It localises to the endoplasmic reticulum. It catalyses the reaction GTP + H2O = GDP + phosphate + H(+). Functionally, component of the signal recognition particle (SRP) complex, a ribonucleoprotein complex that mediates the cotranslational targeting of secretory and membrane proteins to the endoplasmic reticulum (ER). As part of the SRP complex, associates with the SRP receptor (SR) component SRPRA to target secretory proteins to the endoplasmic reticulum membrane. Binds to the signal sequence of presecretory proteins when they emerge from the ribosomes. Displays basal GTPase activity, and stimulates reciprocal GTPase activation of the SR subunit SRPRA. Forms a guanosine 5'-triphosphate (GTP)-dependent complex with the SR subunit SRPRA. SR compaction and GTPase mediated rearrangement of SR drive SRP-mediated cotranslational protein translocation into the ER. Requires the presence of SRP9/SRP14 and/or SRP19 to stably interact with RNA. This Entamoeba histolytica (strain ATCC 30459 / HM-1:IMSS / ABRM) protein is Signal recognition particle subunit SRP54.